The primary structure comprises 150 residues: Transcriptional repressor NrdR (150 aa).

A zinc finger lies at 3–34; sequence CPFCGYEDTFVIDTREIEDQRVIRRRRECPNC. In terms of domain architecture, ATP-cone spans 49-139; that stretch reads IMVIKKDGRR…VYQEFSSLEE (91 aa).

The protein belongs to the NrdR family. Zn(2+) is required as a cofactor.

Functionally, negatively regulates transcription of bacterial ribonucleotide reductase nrd genes and operons by binding to NrdR-boxes. This is Transcriptional repressor NrdR from Dictyoglomus thermophilum (strain ATCC 35947 / DSM 3960 / H-6-12).